The sequence spans 645 residues: Threonine--tRNA ligase (645 aa).

The TGS domain occupies 1–63 (MNQINIQFPD…EQDGAIEIIT (63 aa)). Positions 242–540 (DHRKIGKDLE…LTEETKGAFP (299 aa)) are catalytic. C336, H387, and H517 together coordinate Zn(2+).

Belongs to the class-II aminoacyl-tRNA synthetase family. Homodimer. Zn(2+) is required as a cofactor.

The protein localises to the cytoplasm. It carries out the reaction tRNA(Thr) + L-threonine + ATP = L-threonyl-tRNA(Thr) + AMP + diphosphate + H(+). Functionally, catalyzes the attachment of threonine to tRNA(Thr) in a two-step reaction: L-threonine is first activated by ATP to form Thr-AMP and then transferred to the acceptor end of tRNA(Thr). Also edits incorrectly charged L-seryl-tRNA(Thr). In Staphylococcus epidermidis (strain ATCC 35984 / DSM 28319 / BCRC 17069 / CCUG 31568 / BM 3577 / RP62A), this protein is Threonine--tRNA ligase.